A 983-amino-acid chain; its full sequence is Inner tegument protein (983 aa).

The interval 474–983 (LNVNTHFAVQ…TSVSLPPASP (510 aa)) is interaction with large tegument protein. Residues 902–932 (PWESAPQPPRLRMTPDTDHEESTAGATSVPE) are disordered. The segment covering 914-923 (MTPDTDHEES) has biased composition (basic and acidic residues).

The protein belongs to the herpesviridae inner tegument protein family. In terms of assembly, interacts (via C-terminus) with the large tegument protein/LTP (via N-terminus).

The protein resides in the virion tegument. It localises to the host cytoplasm. Its subcellular location is the host nucleus. It is found in the host Golgi apparatus. The protein localises to the host trans-Golgi network. Functionally, plays an essential role in cytoplasmic secondary envelopment during viral egress. Interacts with the capsid via the large tegument protein/LTP and participates in its transport to the host trans-Golgi network (TGN) where secondary envelopment occurs. Modulates tegumentation and capsid accumulation at the viral assembly complex. This Homo sapiens (Human) protein is Inner tegument protein (UL47).